A 340-amino-acid polypeptide reads, in one-letter code: MYRKDLDNYLKQRLPKAVFLYGEFDFFIHYYIQTISALFKGNNPDTETSLFYASDYEKSQIATLLEQDSLFGGSSLVILKLDFALHKKFKENDINPFLKALERPSHNRLIIGLYNAKSDTTKYKYTSEIIVKFFQKSPLKDEAICVRFFTPKAWESLKFLQERANFLHLDISGHLLNALFEINNEDLSVSFNDLDKLAVLNAPITLEDIQELSSNAGDMDLQKLILGLFLKKSVLDIYDYLLKEGKKDADILRGLERYFYQLFLFFAHIKTTGLMDAKEVLGYAPPKEIVENYAKNALRLKEAGYKRVFEIFRLWHLQSMQGQKELGFLYLTPIQKIINP.

As to quaternary structure, seems to interact with H.pylori HolB.

Its function is as follows. Could be the functional equivalent of DNA polymerase III delta subunit (HolA). In Helicobacter pylori (strain J99 / ATCC 700824) (Campylobacter pylori J99), this protein is Protein jhp_1168.